The primary structure comprises 339 residues: Longiborneol synthase CLM1 (339 aa).

Residues 1 to 17 (MLATPTLSNFDKPSLPS) are compositionally biased toward polar residues. Residues 1-21 (MLATPTLSNFDKPSLPSSEGG) form a disordered region. Residues Asp-112, Asn-241, Ser-245, and Glu-249 each coordinate Mg(2+). Residues 241-249 (NDVLSFYKE) carry the NDXXSXXXE magnesium-binding motif motif.

The protein belongs to the trichodiene synthase family. Mg(2+) serves as cofactor. Requires Mn(2+) as cofactor.

It carries out the reaction (2E,6E)-farnesyl diphosphate + H2O = (-)-longiborneol + diphosphate. It functions in the pathway mycotoxin biosynthesis. Functionally, terpene cyclase involved in the biosynthesis of culmorin, a tricyclic sesquiterpene diol reported to have antifungal activity and some phytotoxicity to wheat coleoptile tissue, contributing to Fusarium head blight disease. The terpene cyclase CLM1 is responsible for the cyclization of farnesyl diphosphate into the intermediate longiborneol. Longiborneol is then hydroxylated in a regio- and endo-stereoselective manner at position C-11 by the cytochrome P450 monooxygenase CLM2 to produce culmorin. Additional non-specific oxygenases are also able to hydroxylate longiborneol at other sites than C-11 leading to 3-hydroxylongiborneol, 5-hydroxylongiborneol, 12-hydroxylongiborneol and 15-hydroxylongiborneol. Moreover, another oxygenase capable of installing a C-11 exo-hydroxy group in longiborneol can also yield 11-epi-acetylculmorin. The production of these longiborneol derivatives is dwarfed by the high abundance of culmorin, suggesting that CLM2 displays superior enzymatic activity to the unidentified, possibly promiscuous, additional oxygenases. In Gibberella zeae (strain ATCC MYA-4620 / CBS 123657 / FGSC 9075 / NRRL 31084 / PH-1) (Wheat head blight fungus), this protein is Longiborneol synthase CLM1.